The following is a 444-amino-acid chain: Methylenetetrahydrofolate--tRNA-(uracil-5-)-methyltransferase TrmFO (444 aa).

FAD is bound at residue 9 to 14; it reads GAGMAG.

Belongs to the MnmG family. TrmFO subfamily. Requires FAD as cofactor.

Its subcellular location is the cytoplasm. It catalyses the reaction uridine(54) in tRNA + (6R)-5,10-methylene-5,6,7,8-tetrahydrofolate + NADH + H(+) = 5-methyluridine(54) in tRNA + (6S)-5,6,7,8-tetrahydrofolate + NAD(+). It carries out the reaction uridine(54) in tRNA + (6R)-5,10-methylene-5,6,7,8-tetrahydrofolate + NADPH + H(+) = 5-methyluridine(54) in tRNA + (6S)-5,6,7,8-tetrahydrofolate + NADP(+). Functionally, catalyzes the folate-dependent formation of 5-methyl-uridine at position 54 (M-5-U54) in all tRNAs. This Cereibacter sphaeroides (strain ATCC 17025 / ATH 2.4.3) (Rhodobacter sphaeroides) protein is Methylenetetrahydrofolate--tRNA-(uracil-5-)-methyltransferase TrmFO.